The primary structure comprises 210 residues: MTKGILGKKLGMTQVFAVDGKCIPVTVVEAGPCVVLQKKTEEKDGYNALQLGFGAKKTQSVNKPAMGHFKKSGKGAFEFLREVECENIDDHAVGDEITCDGFFATGDVIDVTGTSKGKGFQGVIKRWNFAGGRASHGSMFHRRPGGIGASAWPSRVFKGKKMAGQMGNKRVTTQGLEVVDVRPEKSLVLIKGAVPGPVNGLLLIRKSRKV.

Belongs to the universal ribosomal protein uL3 family. In terms of assembly, part of the 50S ribosomal subunit. Forms a cluster with proteins L14 and L19.

Its function is as follows. One of the primary rRNA binding proteins, it binds directly near the 3'-end of the 23S rRNA, where it nucleates assembly of the 50S subunit. This chain is Large ribosomal subunit protein uL3, found in Syntrophotalea carbinolica (strain DSM 2380 / NBRC 103641 / GraBd1) (Pelobacter carbinolicus).